Reading from the N-terminus, the 121-residue chain is UPF0145 protein SAV_4658 (121 aa).

Belongs to the UPF0145 family.

The polypeptide is UPF0145 protein SAV_4658 (Streptomyces avermitilis (strain ATCC 31267 / DSM 46492 / JCM 5070 / NBRC 14893 / NCIMB 12804 / NRRL 8165 / MA-4680)).